We begin with the raw amino-acid sequence, 202 residues long: Ribosome maturation factor RimP (202 aa).

Belongs to the RimP family.

Its subcellular location is the cytoplasm. Functionally, required for maturation of 30S ribosomal subunits. This Polaromonas naphthalenivorans (strain CJ2) protein is Ribosome maturation factor RimP.